Reading from the N-terminus, the 136-residue chain is 5-hydroxyisourate hydrolase (136 aa).

An N-terminal signal peptide occupies residues 1–22 (MKRHILATVIASLVAAPAMALA). Substrate-binding residues include His31, Arg69, and Tyr133.

This sequence belongs to the transthyretin family. 5-hydroxyisourate hydrolase subfamily. Homotetramer.

It is found in the periplasm. The catalysed reaction is 5-hydroxyisourate + H2O = 5-hydroxy-2-oxo-4-ureido-2,5-dihydro-1H-imidazole-5-carboxylate + H(+). Functionally, catalyzes the hydrolysis of 5-hydroxyisourate (HIU) to 2-oxo-4-hydroxy-4-carboxy-5-ureidoimidazoline (OHCU). The polypeptide is 5-hydroxyisourate hydrolase (hiuH) (Salmonella dublin).